A 375-amino-acid polypeptide reads, in one-letter code: Chaperone protein DnaJ (375 aa).

The 65-residue stretch at 5-69 folds into the J domain; the sequence is DYYEVLGVSK…QKRAQYDQFG (65 aa). Residues 132–214 form a CR-type zinc finger; that stretch reads GKETIIEIPR…CGGTGKVKKR (83 aa). The Zn(2+) site is built by C145, C148, C162, C165, C188, C191, C202, and C205. 4 CXXCXGXG motif repeats span residues 145–152, 162–169, 188–195, and 202–209; these read CETCKGSG, CSHCGGSG, CHHCEGTG, and CSDCGGTG.

This sequence belongs to the DnaJ family. Homodimer. Requires Zn(2+) as cofactor.

The protein resides in the cytoplasm. Participates actively in the response to hyperosmotic and heat shock by preventing the aggregation of stress-denatured proteins and by disaggregating proteins, also in an autonomous, DnaK-independent fashion. Unfolded proteins bind initially to DnaJ; upon interaction with the DnaJ-bound protein, DnaK hydrolyzes its bound ATP, resulting in the formation of a stable complex. GrpE releases ADP from DnaK; ATP binding to DnaK triggers the release of the substrate protein, thus completing the reaction cycle. Several rounds of ATP-dependent interactions between DnaJ, DnaK and GrpE are required for fully efficient folding. Also involved, together with DnaK and GrpE, in the DNA replication of plasmids through activation of initiation proteins. In Bacillus velezensis (strain DSM 23117 / BGSC 10A6 / LMG 26770 / FZB42) (Bacillus amyloliquefaciens subsp. plantarum), this protein is Chaperone protein DnaJ.